A 380-amino-acid chain; its full sequence is Cytochrome b (380 aa).

4 helical membrane-spanning segments follow: residues 34-54, 78-99, 114-134, and 179-199; these read FGSL…LLAM, WLIR…FLHI, WNTG…GYVL, and FFAL…THLM. Residues His-84 and His-98 each contribute to the heme b site. Residues His-183 and His-197 each contribute to the heme b site. His-202 is an a ubiquinone binding site. 4 helical membrane passes run 227–247, 289–309, 321–341, and 348–368; these read LKDI…ALFS, LGGV…PFLH, LSQA…WVGS, and FIII…ILFP.

The protein belongs to the cytochrome b family. As to quaternary structure, the cytochrome bc1 complex contains 11 subunits: 3 respiratory subunits (MT-CYB, CYC1 and UQCRFS1), 2 core proteins (UQCRC1 and UQCRC2) and 6 low-molecular weight proteins (UQCRH/QCR6, UQCRB/QCR7, UQCRQ/QCR8, UQCR10/QCR9, UQCR11/QCR10 and a cleavage product of UQCRFS1). This cytochrome bc1 complex then forms a dimer. Requires heme b as cofactor.

The protein localises to the mitochondrion inner membrane. Functionally, component of the ubiquinol-cytochrome c reductase complex (complex III or cytochrome b-c1 complex) that is part of the mitochondrial respiratory chain. The b-c1 complex mediates electron transfer from ubiquinol to cytochrome c. Contributes to the generation of a proton gradient across the mitochondrial membrane that is then used for ATP synthesis. In Syrmaticus reevesii (Reeves's pheasant), this protein is Cytochrome b (MT-CYB).